Consider the following 368-residue polypeptide: Endoglucanase (368 aa).

Positions 1 to 21 are cleaved as a signal peptide; that stretch reads MNVLRSGIVTMLLLAAFSVQA. The active-site Proton donor is glutamate 55. Aspartate 116 functions as the Nucleophile in the catalytic mechanism.

This sequence belongs to the glycosyl hydrolase 8 (cellulase D) family.

Its subcellular location is the secreted. The catalysed reaction is Endohydrolysis of (1-&gt;4)-beta-D-glucosidic linkages in cellulose, lichenin and cereal beta-D-glucans.. Its pathway is glycan metabolism; bacterial cellulose biosynthesis. Hydrolyzes carboxymethylcellulose. The chain is Endoglucanase (bcsZ) from Escherichia coli (strain K12).